Reading from the N-terminus, the 569-residue chain is Glucose-6-phosphate isomerase, cytosolic 1A (569 aa).

The active-site Proton donor is Glu360. Active-site residues include His391 and Lys516.

This sequence belongs to the GPI family. As to quaternary structure, homodimer.

The protein resides in the cytoplasm. The enzyme catalyses alpha-D-glucose 6-phosphate = beta-D-fructose 6-phosphate. Its pathway is carbohydrate degradation; glycolysis; D-glyceraldehyde 3-phosphate and glycerone phosphate from D-glucose: step 2/4. The protein is Glucose-6-phosphate isomerase, cytosolic 1A (PGIC1-A) of Clarkia lewisii (Farewell-to-spring).